The chain runs to 378 residues: Squalene methyltransferase 2 (378 aa).

The helical transmembrane segment at 17–37 (LLTVKGATGLIAALILGYIII) threads the bilayer.

Belongs to the class I-like SAM-binding methyltransferase superfamily. Erg6/SMT family.

The protein localises to the microsome membrane. The catalysed reaction is squalene + 2 S-adenosyl-L-methionine = 3,22-dimethyl-1,2,23,24-tetradehydro-2,3,22,23-tetrahydrosqualene + 2 S-adenosyl-L-homocysteine + 2 H(+). Functionally, converts squalene to mono- and dimethyl derivatives, but not to tri- and tetramethylated products. Unable to methylate cycloartenol, zymosterol or lanosterol. Methylates both C-3 and C22 positions, but only C-3 position in monomethylated products. Produces mainly monomethylated squalene and only 20% of dimethylated squalene. The protein is Squalene methyltransferase 2 (TMT-2) of Botryococcus braunii (Green alga).